Consider the following 231-residue polypeptide: Ribose-5-phosphate isomerase A (231 aa).

Substrate contacts are provided by residues 32–35 (TGST), 85–88 (DGAD), and 98–101 (KGGG). E107 acts as the Proton acceptor in catalysis. Position 125 (K125) interacts with substrate.

This sequence belongs to the ribose 5-phosphate isomerase family. Homodimer.

The enzyme catalyses aldehydo-D-ribose 5-phosphate = D-ribulose 5-phosphate. It functions in the pathway carbohydrate degradation; pentose phosphate pathway; D-ribose 5-phosphate from D-ribulose 5-phosphate (non-oxidative stage): step 1/1. Catalyzes the reversible conversion of ribose-5-phosphate to ribulose 5-phosphate. This Paraburkholderia phymatum (strain DSM 17167 / CIP 108236 / LMG 21445 / STM815) (Burkholderia phymatum) protein is Ribose-5-phosphate isomerase A.